We begin with the raw amino-acid sequence, 522 residues long: MKNWPRLAFIAWVLLRQGMDQLVLSHMPHASLRLLARLMSIGRTHHEPRGVRLRMALERLGPIFVKFGQVLSTRRDLIPHDIANELAKLQDRVPPFPSDVSRAAVVQSLGRPIEEVFASFDADPVASASIAQVHFGVLHDGREVAVKVLRPNVLNIIEADLALLRVAAAWLERLSPDGRRLRPREVVAEFDNYLHDELDLGREAANAAQLRRNMGGLDLIMLPEMIWDLSSAEVLVMERMHGVPISQIETLRAAGIDIPKLARDGVTIFFTQVFRDGFFHADMHPGNIMVSTAPATFGRYIALDFGIVGTLDSRDKEYLAQNFLAFFRRDYRRVAELHIESGWVPASTRVDELEGAVRAVCEPHFDRPLKDISLGQVLLRLFQTSRRFNVEIQPQLVLLQKTLLNVEGLGRQLDPELDLWQTAKPFLERWMNEQVGWRALLGSIKDEAPRYAKLLPELPRLLHDALQAHARPQRPSDELLLALLHEQRRTNRLLLTVFYLIGGFVAGGLFAHWILPGLLHLL.

Residues 119–496 (SFDADPVASA…QRRTNRLLLT (378 aa)) form the Protein kinase domain. Residues 125-133 (VASASIAQV) and Lys147 each bind ATP. The Proton acceptor role is filled by Asp282. A helical membrane pass occupies residues 494-514 (LLTVFYLIGGFVAGGLFAHWI).

It belongs to the ABC1 family. UbiB subfamily.

It is found in the cell inner membrane. The protein operates within cofactor biosynthesis; ubiquinone biosynthesis [regulation]. In terms of biological role, is probably a protein kinase regulator of UbiI activity which is involved in aerobic coenzyme Q (ubiquinone) biosynthesis. The chain is Probable protein kinase UbiB from Leptothrix cholodnii (strain ATCC 51168 / LMG 8142 / SP-6) (Leptothrix discophora (strain SP-6)).